A 91-amino-acid polypeptide reads, in one-letter code: Large ribosomal subunit protein uL23 (91 aa).

Belongs to the universal ribosomal protein uL23 family. As to quaternary structure, part of the 50S ribosomal subunit. Contacts protein L29, and trigger factor when it is bound to the ribosome.

One of the early assembly proteins it binds 23S rRNA. One of the proteins that surrounds the polypeptide exit tunnel on the outside of the ribosome. Forms the main docking site for trigger factor binding to the ribosome. In Staphylococcus saprophyticus subsp. saprophyticus (strain ATCC 15305 / DSM 20229 / NCIMB 8711 / NCTC 7292 / S-41), this protein is Large ribosomal subunit protein uL23.